A 347-amino-acid chain; its full sequence is Integrin beta-1-binding protein 2 (347 aa).

The Zn(2+) site is built by C5, C10, C24, and H27. Residues C5 to H64 form the CHORD 1 domain. Positions P28 to P31 match the SH3-binding motif. Zn(2+) is bound by residues C42, C43, C59, and H64. Residues P70–P78 carry the SH3-binding motif. Zn(2+) contacts are provided by C149 and C154. The CHORD 2 domain occupies C149 to H208. The SH2-binding motif lies at Y158 to P161. Residues C168 and H171 each coordinate Zn(2+). Residues P172–P175 carry the SH3-binding motif. Zn(2+) contacts are provided by C186, C187, C203, and H208. Residues P215 to E304 enclose the CS domain. Positions Y234–I237 match the SH2-binding motif. Residues L319–E347 are disordered. Positions E320 to E347 are enriched in acidic residues.

As to quaternary structure, interacts with beta-1 integrin subunit. This interaction is regulated by divalent cations, and it occurs only in absence of calcium. As to expression, expressed in skeletal and cardiac muscles but not in other tissues.

Functionally, may play a role during maturation and/or organization of muscles cells. This Homo sapiens (Human) protein is Integrin beta-1-binding protein 2 (ITGB1BP2).